The chain runs to 123 residues: UPF0102 protein APJL_1381 (123 aa).

Belongs to the UPF0102 family.

The polypeptide is UPF0102 protein APJL_1381 (Actinobacillus pleuropneumoniae serotype 3 (strain JL03)).